The sequence spans 358 residues: DNA-directed RNA polymerase subunit alpha (358 aa).

The alpha N-terminal domain (alpha-NTD) stretch occupies residues 1-231; that stretch reads MIQNVTDDKI…NIFLSLSNSS (231 aa). The alpha C-terminal domain (alpha-CTD) stretch occupies residues 266–358; the sequence is QESLGWKKIS…LELINNKDIS (93 aa).

Belongs to the RNA polymerase alpha chain family. In plastids the minimal PEP RNA polymerase catalytic core is composed of four subunits: alpha, beta, beta', and beta''. When a (nuclear-encoded) sigma factor is associated with the core the holoenzyme is formed, which can initiate transcription.

It is found in the plastid. The protein localises to the chloroplast. The catalysed reaction is RNA(n) + a ribonucleoside 5'-triphosphate = RNA(n+1) + diphosphate. DNA-dependent RNA polymerase catalyzes the transcription of DNA into RNA using the four ribonucleoside triphosphates as substrates. The protein is DNA-directed RNA polymerase subunit alpha of Chara vulgaris (Common stonewort).